The primary structure comprises 803 residues: Cation channel sperm-associated auxiliary subunit delta (803 aa).

A signal peptide spans 1–15; that stretch reads MLMLMLAAVATVVRA. Residues 16–720 are Extracellular-facing; sequence QTVCRFRTVR…ALPVAEFRPM (705 aa). Cystine bridges form between Cys19-Cys365, Cys55-Cys142, Cys141-Cys148, Cys383-Cys492, Cys506-Cys698, Cys521-Cys568, and Cys620-Cys648. N-linked (GlcNAc...) asparagine glycosylation is found at Asn226, Asn418, Asn436, Asn468, Asn534, Asn545, and Asn626. The helical transmembrane segment at 721–742 threads the bilayer; the sequence is TSILLMVTVTLFTMWLAYAIPK. Over 743 to 803 the chain is Cytoplasmic; that stretch reads QLRTERGRRL…QIGKKPDIKK (61 aa). The tract at residues 782-803 is disordered; sequence SRRVKDQPEKIPQIGKKPDIKK.

Belongs to the CATSPERD family. Component of the CatSper complex or CatSpermasome composed of the core pore-forming members CATSPER1, CATSPER2, CATSPER3 and CATSPER4 as well as auxiliary members CATSPERB, CATSPERG, CATSPERD, CATSPERE, CATSPERZ, C2CD6/CATSPERT, SLCO6C1, TMEM249, TMEM262 and EFCAB9. HSPA1 may be an additional auxiliary complex member. The core complex members CATSPER1, CATSPER2, CATSPER3 and CATSPER4 form a heterotetrameric channel. The auxiliary CATSPERB, CATSPERG, CATSPERD and CATSPERE subunits form a pavilion-like structure over the pore which stabilizes the complex through interactions with CATSPER4, CATSPER3, CATSPER1 and CATSPER2 respectively. SLCO6C1 interacts with CATSPERE and TMEM262/CATSPERH interacts with CATSPERB, further stabilizing the complex. C2CD6/CATSPERT interacts at least with CATSPERD and is required for targeting the CatSper complex in the flagellar membrane.

It localises to the cell projection. The protein localises to the cilium. Its subcellular location is the flagellum membrane. Functionally, auxiliary component of the CatSper complex, a complex involved in sperm cell hyperactivation. Sperm cell hyperactivation is needed for sperm motility which is essential late in the preparation of sperm for fertilization. Required for CATSPER1 stability before intraflagellar transport and/or incorporation of the CatSper complex channel into the flagellar membrane. The polypeptide is Cation channel sperm-associated auxiliary subunit delta (Rattus norvegicus (Rat)).